Here is a 198-residue protein sequence, read N- to C-terminus: Proteasome subunit beta type-2 (198 aa).

Belongs to the peptidase T1B family. As to quaternary structure, the 26S proteasome consists of a 20S proteasome core and two 19S regulatory subunits. The 20S proteasome core is composed of 28 subunits that are arranged in four stacked rings, resulting in a barrel-shaped structure. The two end rings are each formed by seven alpha subunits, and the two central rings are each formed by seven beta subunits. The catalytic chamber with the active sites is on the inside of the barrel.

It is found in the cytoplasm. Its subcellular location is the nucleus. In terms of biological role, non-catalytic component of the proteasome, a multicatalytic proteinase complex which is characterized by its ability to cleave peptides with Arg, Phe, Tyr, Leu, and Glu adjacent to the leaving group at neutral or slightly basic pH. The proteasome has an ATP-dependent proteolytic activity. This chain is Proteasome subunit beta type-2 (psmB2), found in Dictyostelium discoideum (Social amoeba).